Here is a 466-residue protein sequence, read N- to C-terminus: ATP synthase subunit beta (466 aa).

Position 152-159 (152-159 (GGAGVGKT)) interacts with ATP.

This sequence belongs to the ATPase alpha/beta chains family. In terms of assembly, F-type ATPases have 2 components, CF(1) - the catalytic core - and CF(0) - the membrane proton channel. CF(1) has five subunits: alpha(3), beta(3), gamma(1), delta(1), epsilon(1). CF(0) has three main subunits: a(1), b(2) and c(9-12). The alpha and beta chains form an alternating ring which encloses part of the gamma chain. CF(1) is attached to CF(0) by a central stalk formed by the gamma and epsilon chains, while a peripheral stalk is formed by the delta and b chains.

The protein resides in the cell inner membrane. The enzyme catalyses ATP + H2O + 4 H(+)(in) = ADP + phosphate + 5 H(+)(out). Produces ATP from ADP in the presence of a proton gradient across the membrane. The catalytic sites are hosted primarily by the beta subunits. This Helicobacter pylori (strain HPAG1) protein is ATP synthase subunit beta.